A 103-amino-acid polypeptide reads, in one-letter code: Pyrimidine/purine nucleoside phosphorylase (103 aa).

Belongs to the nucleoside phosphorylase PpnP family.

It carries out the reaction a purine D-ribonucleoside + phosphate = a purine nucleobase + alpha-D-ribose 1-phosphate. It catalyses the reaction adenosine + phosphate = alpha-D-ribose 1-phosphate + adenine. The catalysed reaction is cytidine + phosphate = cytosine + alpha-D-ribose 1-phosphate. The enzyme catalyses guanosine + phosphate = alpha-D-ribose 1-phosphate + guanine. It carries out the reaction inosine + phosphate = alpha-D-ribose 1-phosphate + hypoxanthine. It catalyses the reaction thymidine + phosphate = 2-deoxy-alpha-D-ribose 1-phosphate + thymine. The catalysed reaction is uridine + phosphate = alpha-D-ribose 1-phosphate + uracil. The enzyme catalyses xanthosine + phosphate = alpha-D-ribose 1-phosphate + xanthine. Its function is as follows. Catalyzes the phosphorolysis of diverse nucleosides, yielding D-ribose 1-phosphate and the respective free bases. Can use uridine, adenosine, guanosine, cytidine, thymidine, inosine and xanthosine as substrates. Also catalyzes the reverse reactions. This chain is Pyrimidine/purine nucleoside phosphorylase, found in Sulfurimonas denitrificans (strain ATCC 33889 / DSM 1251) (Thiomicrospira denitrificans (strain ATCC 33889 / DSM 1251)).